Consider the following 273-residue polypeptide: uncharacterized protein (273 aa).

10 to 34 (VITGAATGIGQATAEVFANEGARVI) contributes to the NAD(+) binding site. Ser142 serves as a coordination point for substrate. Tyr155 serves as the catalytic Proton acceptor.

The protein belongs to the short-chain dehydrogenases/reductases (SDR) family.

This is an uncharacterized protein from Bacillus subtilis (strain 168).